The primary structure comprises 626 residues: Putative ankyrin repeat protein L768 (626 aa).

ANK repeat units follow at residues 217-246 (NLYD…EYDF), 333-362 (DLDM…NINK), 421-451 (TAEN…TEHI), 515-545 (SNLK…NQDY), and 547-571 (QWAL…NVNP).

The chain is Putative ankyrin repeat protein L768 from Acanthamoeba polyphaga mimivirus (APMV).